Here is a 151-residue protein sequence, read N- to C-terminus: MGAMHSRGKGISSSALPYKRTPPTWLKTAASDVEEMITKAAKKGQMPSQIGVLLRDQHGIPLVKSVTGSKILRILKAHGLAPEIPEDLYFLIKKAVAIRKHLERNRKDKDSKFRLILVESRIHRLARYYKRTKKLPPTWKYESTTASTLVA.

This sequence belongs to the universal ribosomal protein uS15 family.

This is Small ribosomal subunit protein uS15 (RPS13) from Zea mays (Maize).